The following is a 32-amino-acid chain: Yop proteins translocation protein A (32 aa).

The protein is Yop proteins translocation protein A (yscA) of Yersinia pestis.